We begin with the raw amino-acid sequence, 277 residues long: Large ribosomal subunit protein uL2 (277 aa).

The tract at residues T219–K277 is disordered.

This sequence belongs to the universal ribosomal protein uL2 family. In terms of assembly, part of the 50S ribosomal subunit. Forms a bridge to the 30S subunit in the 70S ribosome.

In terms of biological role, one of the primary rRNA binding proteins. Required for association of the 30S and 50S subunits to form the 70S ribosome, for tRNA binding and peptide bond formation. It has been suggested to have peptidyltransferase activity; this is somewhat controversial. Makes several contacts with the 16S rRNA in the 70S ribosome. The chain is Large ribosomal subunit protein uL2 from Clostridium botulinum (strain ATCC 19397 / Type A).